A 239-amino-acid polypeptide reads, in one-letter code: Fatty acid metabolism regulator protein (239 aa).

The 69-residue stretch at 6 to 74 (QSPAGFAEEY…HGKPTKVNNF (69 aa)) folds into the HTH gntR-type domain. The segment at residues 34–53 (ERELSELIGVTRTTLREVLQ) is a DNA-binding region (H-T-H motif).

As to quaternary structure, homodimer.

Its subcellular location is the cytoplasm. Multifunctional regulator of fatty acid metabolism. In Escherichia fergusonii (strain ATCC 35469 / DSM 13698 / CCUG 18766 / IAM 14443 / JCM 21226 / LMG 7866 / NBRC 102419 / NCTC 12128 / CDC 0568-73), this protein is Fatty acid metabolism regulator protein.